The chain runs to 148 residues: MDVLFIALLVAPLILGQEYDHEEQLEEGDYYQVAYYYYTVTPNYDDFSVNFTVDYSVFESEDRLNRLNKEVTTTEAVETTASSYSLHTELMDPQNPVTTKPVTTEPVTTEPVTTEPQSPNQNDAMSTLQSPVSCFLLWTLLQGGVHFM.

The first 16 residues, 1 to 16 (MDVLFIALLVAPLILG), serve as a signal peptide directing secretion. Asn-50 is a glycosylation site (N-linked (GlcNAc...) asparagine). The disordered stretch occupies residues 91–125 (MDPQNPVTTKPVTTEPVTTEPVTTEPQSPNQNDAM). The segment covering 96-116 (PVTTKPVTTEPVTTEPVTTEP) has biased composition (low complexity).

It is found in the secreted. This is an uncharacterized protein from Mus musculus (Mouse).